Reading from the N-terminus, the 119-residue chain is Ribonuclease P protein component (119 aa).

Belongs to the RnpA family. In terms of assembly, consists of a catalytic RNA component (M1 or rnpB) and a protein subunit.

It catalyses the reaction Endonucleolytic cleavage of RNA, removing 5'-extranucleotides from tRNA precursor.. Its function is as follows. RNaseP catalyzes the removal of the 5'-leader sequence from pre-tRNA to produce the mature 5'-terminus. It can also cleave other RNA substrates such as 4.5S RNA. The protein component plays an auxiliary but essential role in vivo by binding to the 5'-leader sequence and broadening the substrate specificity of the ribozyme. The protein is Ribonuclease P protein component of Streptococcus equi subsp. zooepidemicus (strain MGCS10565).